The sequence spans 189 residues: MSSLEISSSCFNQETKLPLSLPLVEGSTFEPPGKDMNEVEEKSKDIIKFTSEKLSVDEVSQLVISPLCGAISLFVGTTRNNFEGKKVISLEYEAYLPMAENEIRKICSDMRQKWPVRHIAVFHRLGLVPVTEASVIIAVSSAHRAASLEAVSYAIDALKARVPIWKKEIYEESSSSWKRNKECFWATSD.

At Ser20 the chain carries Phosphoserine. Residues 143 to 144 (HR), Lys159, and 166 to 168 (KKE) contribute to the substrate site.

Belongs to the MoaE family. MOCS2B subfamily. Heterotetramer; composed of 2 small (MOCS2A) and 2 large (MOCS2B) subunits.

The protein localises to the cytoplasm. It is found in the cytosol. The catalysed reaction is 2 [molybdopterin-synthase sulfur-carrier protein]-C-terminal-Gly-aminoethanethioate + cyclic pyranopterin phosphate + H2O = molybdopterin + 2 [molybdopterin-synthase sulfur-carrier protein]-C-terminal Gly-Gly + 2 H(+). Its pathway is cofactor biosynthesis; molybdopterin biosynthesis. Catalytic subunit of the molybdopterin synthase complex, a complex that catalyzes the conversion of precursor Z into molybdopterin. Acts by mediating the incorporation of 2 sulfur atoms from thiocarboxylated MOCS2A into precursor Z to generate a dithiolene group. This is Molybdopterin synthase catalytic subunit from Bos taurus (Bovine).